Consider the following 344-residue polypeptide: Interactor of constitutive active ROPs 1 (344 aa).

Disordered stretches follow at residues 1-74 (MPRP…ESQL), 92-139 (EAVK…KETD), 186-218 (HESL…DEMV), and 307-344 (FMDP…KGQK). Residues 19–29 (SSSSTSDSNHS) show a composition bias toward low complexity. Residues 60–108 (QKKLGGRISDLESQLGQAQEELRLLKEQLANAEAVKKQAQDELHKKSKK) adopt a coiled-coil conformation. 3 stretches are compositionally biased toward basic and acidic residues: residues 93–103 (AVKKQAQDELH), 114–139 (RVEE…KETD), and 186–195 (HESLGKENES). The stretch at 145–273 (VEKIAVEEEE…EQWRKAADAA (129 aa)) forms a coiled coil. The span at 196-211 (LKNQLSDSASEISNVK) shows a compositional bias: polar residues.

The protein belongs to the ICR family. In terms of assembly, homooligomer. Interacts with ARAC3, ARAC4, ARAC8, ARAC11 and SEC3A, but not with ICR2 or EXO70A1. As to expression, expressed in mature and germinating pollen. Expressed throughout the embryo but not in the hypophysis and quiescent center (QC). In roots, absent from the QC and the stem cells.

The protein localises to the cell membrane. The protein resides in the nucleus. Its function is as follows. Acts as a scaffold, mediating interaction of ROPs with different proteins. Required for primary and adventitious root maintenance, but not for their formation. Promotes the stabilization of ARAC11 on the plasma membrane of the pollen tube initiation site but not the activation of ARAC11. Regulates directionality of polar auxin transport, and is required for the formation of a stable auxin maximum and tip localized auxin gradient during embryogenesis, organogenesis, and meristem activity. Involved in exocytosis and in the recycling of PIN proteins back to the plasma membrane. The sequence is that of Interactor of constitutive active ROPs 1 (ICR1) from Arabidopsis thaliana (Mouse-ear cress).